The primary structure comprises 170 residues: Adenine phosphoribosyltransferase (170 aa).

Belongs to the purine/pyrimidine phosphoribosyltransferase family. As to quaternary structure, homodimer.

It is found in the cytoplasm. It catalyses the reaction AMP + diphosphate = 5-phospho-alpha-D-ribose 1-diphosphate + adenine. It functions in the pathway purine metabolism; AMP biosynthesis via salvage pathway; AMP from adenine: step 1/1. Catalyzes a salvage reaction resulting in the formation of AMP, that is energically less costly than de novo synthesis. This chain is Adenine phosphoribosyltransferase, found in Mycoplasma capricolum subsp. capricolum (strain California kid / ATCC 27343 / NCTC 10154).